The following is a 596-amino-acid chain: MKNIRNFSIIAHIDHGKSTLADRLIQECGAVEARDMKAQLMDTMDIEKERGITIKAQSVRLSYRYEGEDYILNLIDTPGHVDFSYEVSRSLASCEGALLVVDASQGVEAQTIANVYIALDNELEILPVINKIDLPAADPLRVKQEIEQTIGLDCSGALHVSAKSGLGIKELLDEIIRRIPAPNGQESASTKALIYDSWFDNYLGALALVRVVDGSIKVGQNILVMSTGKKHEVLNLMYPHPLAPQKTQEIKTGEIGIVVLGLKNVTDIAVGDTMTDAKNPTKEAIDGFQPAKPFVFAGLYPIDTDRFEELRDALNKLKLNDSSIQYEPETSVALGFGFRVGFLGMLHMEVIKERLEREFDLDLIATAPTVIYHLTLTDGSEVSVQNPSELPPEQKIAKMEEPYVRATIIVPSEYLGNVITMVSRRRGVQEKMEYINETRVMLVYAIPTNEIVMDFYDKLKSGTKGYASFDYEPIEYREGDLAKLDIRVAGEIVDALSIIVPKEKSYERGKELVEAMKEIVPRQLFEVAIQASVGNKIIARETVKSMGKNVTAKCYGGDITRKRKLLEKQKEGKKRMKAIGRVELPQEAFLAVLKID.

The tr-type G domain maps to 2-183 (KNIRNFSIIA…EIIRRIPAPN (182 aa)). GTP-binding positions include 14–19 (DHGKST) and 130–133 (NKID).

This sequence belongs to the TRAFAC class translation factor GTPase superfamily. Classic translation factor GTPase family. LepA subfamily.

The protein localises to the cell inner membrane. It catalyses the reaction GTP + H2O = GDP + phosphate + H(+). Required for accurate and efficient protein synthesis under certain stress conditions. May act as a fidelity factor of the translation reaction, by catalyzing a one-codon backward translocation of tRNAs on improperly translocated ribosomes. Back-translocation proceeds from a post-translocation (POST) complex to a pre-translocation (PRE) complex, thus giving elongation factor G a second chance to translocate the tRNAs correctly. Binds to ribosomes in a GTP-dependent manner. The sequence is that of Elongation factor 4 from Wolinella succinogenes (strain ATCC 29543 / DSM 1740 / CCUG 13145 / JCM 31913 / LMG 7466 / NCTC 11488 / FDC 602W) (Vibrio succinogenes).